Reading from the N-terminus, the 311-residue chain is CARD domain-containing protein E10 (311 aa).

Positions 21 to 110 (IWDVERLCLE…EHLVDLLERA (90 aa)) constitute a CARD domain. Disordered stretches follow at residues 125 to 181 (ESGA…GGVY), 203 to 230 (GAGRGGSLLSGGHGGHPPHGGPGGGGRD), and 243 to 311 (IPEP…FFCC). The span at 140–152 (EDNSGYTALLPTN) shows a compositional bias: polar residues. A compositionally biased stretch (gly residues) spans 252–272 (SGGGGRGGGVRYDAGGDGRLG).

The protein resides in the host cell membrane. Its function is as follows. Activates host NF-kappa-B and JNK pathways. Induces hyperphosphorylation and redistribution of host bcl-10 from the cytoplasm to the plasma membrane. The inhibitory effect of cellular bcl-10 on NF-kappa-B pathway is then overcome allowing NF-kappa-B activation. The polypeptide is CARD domain-containing protein E10 (E10) (Equus caballus (Horse)).